We begin with the raw amino-acid sequence, 71 residues long: uncharacterized protein (71 aa).

A helical membrane pass occupies residues 12 to 34; sequence YLYNYFSSTTSWLVFIILSLDTI.

It localises to the membrane. This is an uncharacterized protein from Schizosaccharomyces pombe (strain 972 / ATCC 24843) (Fission yeast).